Consider the following 479-residue polypeptide: Ribosomal RNA small subunit methyltransferase F (479 aa).

S-adenosyl-L-methionine is bound by residues 125-131 (AAAPGSK), Glu149, Asp176, and Asp194. Cys247 serves as the catalytic Nucleophile.

Belongs to the class I-like SAM-binding methyltransferase superfamily. RsmB/NOP family.

The protein localises to the cytoplasm. It carries out the reaction cytidine(1407) in 16S rRNA + S-adenosyl-L-methionine = 5-methylcytidine(1407) in 16S rRNA + S-adenosyl-L-homocysteine + H(+). Functionally, specifically methylates the cytosine at position 1407 (m5C1407) of 16S rRNA. This Shigella dysenteriae serotype 1 (strain Sd197) protein is Ribosomal RNA small subunit methyltransferase F.